We begin with the raw amino-acid sequence, 336 residues long: GTPase Obg (336 aa).

The Obg domain maps to 1–159 (MKFLDETKVY…KTIWLRLKLI (159 aa)). The OBG-type G domain occupies 160–327 (ADAGLVGLPN…TLRALRSVID (168 aa)). Residues 166 to 173 (GLPNAGKS), 191 to 195 (FTTLH), 212 to 215 (DIPG), 279 to 282 (SQID), and 308 to 310 (SAV) contribute to the GTP site. The Mg(2+) site is built by serine 173 and threonine 193.

This sequence belongs to the TRAFAC class OBG-HflX-like GTPase superfamily. OBG GTPase family. As to quaternary structure, monomer. Requires Mg(2+) as cofactor.

It localises to the cytoplasm. Functionally, an essential GTPase which binds GTP, GDP and possibly (p)ppGpp with moderate affinity, with high nucleotide exchange rates and a fairly low GTP hydrolysis rate. Plays a role in control of the cell cycle, stress response, ribosome biogenesis and in those bacteria that undergo differentiation, in morphogenesis control. This Sinorhizobium medicae (strain WSM419) (Ensifer medicae) protein is GTPase Obg.